A 156-amino-acid polypeptide reads, in one-letter code: Succinate dehydrogenase assembly factor 2-B, mitochondrial (156 aa).

The transit peptide at 1–24 directs the protein to the mitochondrion; that stretch reads MLRQFIISTVGRRQPLLMILQSRL.

It belongs to the SDHAF2 family. In terms of assembly, interacts with the flavoprotein subunit within the SDH catalytic dimer.

The protein localises to the mitochondrion matrix. Its function is as follows. Plays an essential role in the assembly of succinate dehydrogenase (SDH), an enzyme complex (also referred to as respiratory complex II) that is a component of both the tricarboxylic acid (TCA) cycle and the mitochondrial electron transport chain, and which couples the oxidation of succinate to fumarate with the reduction of ubiquinone (coenzyme Q) to ubiquinol. Required for flavinylation (covalent attachment of FAD) of the flavoprotein subunit of the SDH catalytic dimer. This Drosophila yakuba (Fruit fly) protein is Succinate dehydrogenase assembly factor 2-B, mitochondrial.